Consider the following 663-residue polypeptide: Transketolase 1 (663 aa).

Histidine 26 contacts substrate. N6-acetyllysine is present on lysine 46. Residues histidine 66 and 114-116 each bind thiamine diphosphate; that span reads GPL. Aspartate 155 is a binding site for Mg(2+). Residues glycine 156 and asparagine 185 each contribute to the thiamine diphosphate site. Residues asparagine 185 and isoleucine 187 each coordinate Mg(2+). 3 residues coordinate substrate: histidine 261, arginine 358, and serine 385. Residue histidine 261 coordinates thiamine diphosphate. Residue glutamate 411 is the Proton donor of the active site. Position 437 (phenylalanine 437) interacts with thiamine diphosphate. Substrate contacts are provided by histidine 461, aspartate 469, histidine 473, and arginine 520.

Belongs to the transketolase family. As to quaternary structure, homodimer. The cofactor is Mg(2+). Requires Ca(2+) as cofactor. Mn(2+) is required as a cofactor. Co(2+) serves as cofactor. It depends on thiamine diphosphate as a cofactor.

It carries out the reaction D-sedoheptulose 7-phosphate + D-glyceraldehyde 3-phosphate = aldehydo-D-ribose 5-phosphate + D-xylulose 5-phosphate. In terms of biological role, catalyzes the transfer of a two-carbon ketol group from a ketose donor to an aldose acceptor, via a covalent intermediate with the cofactor thiamine pyrophosphate. Thus, catalyzes the reversible transfer of a two-carbon ketol group from sedoheptulose-7-phosphate to glyceraldehyde-3-phosphate, producing xylulose-5-phosphate and ribose-5-phosphate. The chain is Transketolase 1 (tktA) from Escherichia coli (strain K12).